Consider the following 681-residue polypeptide: Glutamine--fructose-6-phosphate aminotransferase [isomerizing] 1 (681 aa).

C2 serves as the catalytic For GATase activity. The Glutamine amidotransferase type-2 domain maps to 2–287; it reads CGIFAYLNYH…DDDVAAVVDG (286 aa). 2 positions are modified to phosphoserine: S103 and S243. Positions 295-662 are isomerase; the sequence is KRTARDHPGR…LQLLAFHLAV (368 aa). SIS domains follow at residues 359–498 and 530–671; these read HIKE…DRIS and LATE…VDFP. Substrate-binding positions include 376-377, 421-423, T426, and H577; these read TS and SQS.

In terms of assembly, homotetramer, may also exist as homodimers.

It carries out the reaction D-fructose 6-phosphate + L-glutamine = D-glucosamine 6-phosphate + L-glutamate. It participates in nucleotide-sugar biosynthesis; UDP-N-acetyl-alpha-D-glucosamine biosynthesis; alpha-D-glucosamine 6-phosphate from D-fructose 6-phosphate: step 1/1. Its activity is regulated as follows. Inhibited by 4,4'-dithiodipyridine. In terms of biological role, controls the flux of glucose into the hexosamine pathway. Most likely involved in regulating the availability of precursors for N- and O-linked glycosylation of proteins. Regulates the circadian expression of clock genes BMAL1 and CRY1. Has a role in fine tuning the metabolic fluctuations of cytosolic UDP-GlcNAc and its effects on hyaluronan synthesis that occur during tissue remodeling. The sequence is that of Glutamine--fructose-6-phosphate aminotransferase [isomerizing] 1 (Gfpt1) from Rattus norvegicus (Rat).